Reading from the N-terminus, the 117-residue chain is Gamma-aminobutyric acid receptor-associated protein-like 3 (117 aa).

Residues 1-22 (MKFQYKEVHPFEYRKKEGEKIR) form an interaction with beta-tubulin region. Positions 36–68 (APKARVPDLDRRKYLVPSDLTDGQFYLLIRKRI) are interaction with GABRG2. Gly116 is lipidated: Phosphatidylethanolamine amidated glycine. A propeptide (removed in mature form) is located at residue Lys117.

It belongs to the ATG8 family. In terms of assembly, interacts with GABRG2 and beta-tubulin. Post-translationally, the precursor molecule is cleaved by ATG4B to form the cytosolic form, GABARAPL3-I. This is activated by APG7L/ATG7, transferred to ATG3 and conjugated to phospholipid to form the membrane-bound form, GABARAPL3-II. ATG4B also mediates the delipidation required for GABARAPL1 recycling when autophagosomes fuse with lysosomes. Ubiquitous. Expressed at very high levels in the brain, heart, peripheral blood leukocytes, liver, kidney, placenta and skeletal muscle. Expressed at very low levels in thymus and small intestine.

It localises to the cytoplasm. Its subcellular location is the cytoskeleton. It is found in the cytoplasmic vesicle. The protein resides in the autophagosome membrane. Ubiquitin-like modifier involved in autophagosome formation. Whereas LC3s are involved in elongation of the phagophore membrane, the GABARAP/GATE-16 subfamily is essential for a later stage in autophagosome maturation. The polypeptide is Gamma-aminobutyric acid receptor-associated protein-like 3 (GABARAPL3) (Homo sapiens (Human)).